The sequence spans 637 residues: Probable potassium transport system protein Kup 2 (637 aa).

The interval 1–21 is disordered; that stretch reads MDLASRDSEAETVEQSSHSGA. The next 12 helical transmembrane spans lie at 29-49, 68-88, 116-136, 150-170, 180-200, 228-248, 258-278, 300-320, 359-379, 381-401, 409-429, and 434-454; these read LMLG…IYAF, VLSL…VAFV, LILA…IITP, VTPT…AILF, VAAV…VAGL, AAFV…ALYV, IVLA…FGQG, ALMP…QAVI, LLVA…SSLA, AYGI…FVVM, LAVA…FFLA, and IFEG…IMWT.

Belongs to the HAK/KUP transporter (TC 2.A.72) family.

It localises to the cell inner membrane. It catalyses the reaction K(+)(in) + H(+)(in) = K(+)(out) + H(+)(out). Its function is as follows. Transport of potassium into the cell. Likely operates as a K(+):H(+) symporter. The protein is Probable potassium transport system protein Kup 2 of Mesorhizobium japonicum (strain LMG 29417 / CECT 9101 / MAFF 303099) (Mesorhizobium loti (strain MAFF 303099)).